A 113-amino-acid chain; its full sequence is Protein SPIRAL1-like 1 (113 aa).

The span at Met1–Ser12 shows a compositional bias: gly residues. Residues Met1 to Val50 form a disordered region. Residues Ala23–Pro34 show a composition bias toward low complexity. At Ser69 the chain carries Phosphoserine. A disordered region spans residues Gln79–Asn113. A compositionally biased stretch (gly residues) spans Pro97–Asn113.

It belongs to the SPIRAL1 family. In terms of tissue distribution, detected in pollen of mature flowers.

Functionally, acts redundantly with SPR1 in maintaining the cortical microtubules organization essential for anisotropic cell growth. This chain is Protein SPIRAL1-like 1 (SP1L1), found in Arabidopsis thaliana (Mouse-ear cress).